Here is a 574-residue protein sequence, read N- to C-terminus: Sorting nexin-33 (574 aa).

The SH3 domain maps to 1 to 61; the sequence is MALKGRALYD…PASYVEIVRS (61 aa). The tract at residues 68–119 is disordered; the sequence is ADYSSSPAGSPGAQVSLYNSPSVASPARSGGGSGFLSNQGSFEEDDDDDWDD. 2 positions are modified to phosphoserine: S77 and S92. The span at 109–119 shows a compositional bias: acidic residues; the sequence is FEEDDDDDWDD. A PX domain is found at 230–340; that stretch reads FACSVEDPTK…HFLSCLDDKQ (111 aa). The 204-residue stretch at 371–574 folds into the BAR domain; sequence LQDVEDRVDT…EKTLRMYDNL (204 aa).

Belongs to the sorting nexin family. In terms of assembly, homodimer (via BAR domain). Interacts with ADAM15. Interacts with FASLG. Interacts (via SH3 domain) with DNM1 and DNM2. Interacts with WASL. Interacts with FCHSD1 (via the F-BAR domain). Phosphorylated. Detected in heart and pancreas.

The protein localises to the cytoplasm. It localises to the cytosol. Its subcellular location is the membrane. It is found in the cytoplasmic vesicle membrane. Its function is as follows. Plays a role in the reorganization of the cytoskeleton, endocytosis and cellular vesicle trafficking via its interactions with membranes, WASL, DNM1 and DNM2. Acts both during interphase and at the end of mitotic cell divisions. Required for efficient progress through mitosis and cytokinesis. Required for normal formation of the cleavage furrow at the end of mitosis. Modulates endocytosis of cell-surface proteins, such as APP and PRNP; this then modulates the secretion of APP and PRNP peptides. Promotes membrane tubulation (in vitro). May promote the formation of macropinosomes. The polypeptide is Sorting nexin-33 (SNX33) (Homo sapiens (Human)).